The primary structure comprises 115 residues: uncharacterized protein (115 aa).

The tract at residues 1 to 74 (MGTGLRSQSL…VPGSLGDTEQ (74 aa)) is disordered.

This is an uncharacterized protein from Homo sapiens (Human).